We begin with the raw amino-acid sequence, 104 residues long: Cell cycle protein GpsB (104 aa).

The stretch at Leu34–Arg72 forms a coiled coil. Basic and acidic residues predominate over residues Thr60–Thr71. Residues Thr60 to Thr82 form a disordered region. The span at His73–Thr82 shows a compositional bias: polar residues.

The protein belongs to the GpsB family. As to quaternary structure, forms polymers through the coiled coil domains. Interacts with PBP1, MreC and EzrA.

The protein resides in the cytoplasm. In terms of biological role, divisome component that associates with the complex late in its assembly, after the Z-ring is formed, and is dependent on DivIC and PBP2B for its recruitment to the divisome. Together with EzrA, is a key component of the system that regulates PBP1 localization during cell cycle progression. Its main role could be the removal of PBP1 from the cell pole after pole maturation is completed. Also contributes to the recruitment of PBP1 to the division complex. Not essential for septum formation. The chain is Cell cycle protein GpsB from Halalkalibacterium halodurans (strain ATCC BAA-125 / DSM 18197 / FERM 7344 / JCM 9153 / C-125) (Bacillus halodurans).